The following is a 187-amino-acid chain: Flavin prenyltransferase LpdB (187 aa).

Residues 10 to 12, Ser37, 88 to 91, and Arg123 each bind FMN; these read GAS and SMKT. Residues Tyr153 and Lys169 each contribute to the dimethylallyl phosphate site.

This sequence belongs to the UbiX/PAD1 family.

It carries out the reaction dimethylallyl phosphate + FMNH2 = prenylated FMNH2 + phosphate. Functionally, involved in tannin degradation. Flavin prenyltransferase that catalyzes the synthesis of the prenylated FMN cofactor (prenyl-FMN) for gallate decarboxylase LpdC. The prenyltransferase is metal-independent and links a dimethylallyl moiety from dimethylallyl monophosphate (DMAP) to the flavin N5 and C6 atoms of FMN. The chain is Flavin prenyltransferase LpdB from Lactiplantibacillus plantarum (strain ATCC BAA-793 / NCIMB 8826 / WCFS1) (Lactobacillus plantarum).